A 324-amino-acid polypeptide reads, in one-letter code: MKRIPIKELIVEHPGKVLILDGGQGTELENRGININSPVWSAAPFTSESFWEPSSQERKVVEEMYRDFMIAGANILMTITYQANFQSISENTSIKTLAAYKRFLDKIVSFTREFIGEERYLIGSIGPWAAHVSCEYTGDYGPHPENIDYYGFFKPQLENFNQNRDIDLIGFETIPNFHELKAILSWDEDIISKPFYIGLSVDDNSLLRDGTTLEEISVHIKGLGNKINKNLLLMGVNCVSFNQSALILKMLHEHLPGMPLLVYPNSGEIYNPKEKTWHRPTNKLDDWETTVKKFVDNGARIIGGCCRTSPKDIAEIASAVDKYS.

The 315-residue stretch at 6-320 (IKELIVEHPG…KDIAEIASAV (315 aa)) folds into the Hcy-binding domain. Positions 238, 305, and 306 each coordinate Zn(2+).

The cofactor is Zn(2+).

It localises to the cytoplasm. It carries out the reaction S-methyl-L-methionine + L-homocysteine = 2 L-methionine + H(+). In terms of biological role, homocysteine S-methyltransferase involved in the conversion of S-adenosylmethionine (AdoMet) to methionine to control the methionine/AdoMet ratio. Also converts S-methylmethionine (SMM) to methionine. The protein is Homocysteine S-methyltransferase 1 (MHT1) of Saccharomyces cerevisiae (strain ATCC 204508 / S288c) (Baker's yeast).